The sequence spans 2135 residues: MPALGPALLQALWAGWVLTLQPLPPTAFTPNGTYLQHLARDPTSGTLYLGATNFLFQLSPGLQLEATVSTGPVLDSRDCLPPVMPDECPQAQPTNNPNQLLLVSPGALVVCGSVHQGVCEQRRLGQLEQLLLRPERPGDTQYVAANDPAVSTVGLVAQGLAGEPLLFVGRGYTSRGVGGGIPPITTRALWPPDPQAAFSYEETAKLAVGRLSEYSHHFVSAFARGASAYFLFLRRDLQAQSRAFRAYVSRVCLRDQHYYSYVELPLACEGGRYGLIQAAAVATSREVAHGEVLFAAFSSAAPPTVGRPPSAAAGASGASALCAFPLDEVDRLANRTRDACYTREGRAEDGTEVAYIEYDVNSDCAQLPVDTLDAYPCGSDHTPSPMASRVPLEATPILEWPGIQLTAVAVTMEDGHTIAFLGDSQGQLHRVYLGPGSDGHPYSTQSIQQGSAVSRDLTFDGTFEHLYVMTQSTLLKVPVASCAQHLDCASCLAHRDPYCGWCVLLGRCSRRSECSRGQGPEQWLWSFQPELGCLQVAAMSPANISREETREVFLSVPDLPPLWPGESYSCHFGEHQSPALLTGSGVMCPSPDPSEAPVLPRGADYVSVSVELRFGAVVIAKTSLSFYDCVAVTELRPSAQCQACVSSRWGCNWCVWQHLCTHKASCDAGPMVASHQSPLVSPDPPARGGPSPSPPTAPKALATPAPDTLPVEPGAPSTATASDISPGASPSLLSPWGPWAGSGSISSPGSTGSPLHEEPSPPSPQNGPGTAVPAPTDFRPSATPEDLLASPLSPSEVAAVPPADPGPEALHPTVPLDLPPATVPATTFPGAMGSVKPALDWLTREGGELPEADEWTGGDAPAFSTSTLLSGDGDSAELEGPPAPLILPSSLDYQYDTPGLWELEEATLGASSCPCVESVQGSTLMPVHVEREIRLLGRNLHLFQDGPGDNECVMELEGLEVVVEARVECEPPPDTQCHVTCQQHQLSYEALQPELRVGLFLRRAGRLRVDSAEGLHVVLYDCSVGHGDCSRCQTAMPQYGCVWCEGERPRCVTREACGEAEAVATQCPAPLIHSVEPLTGPVDGGTRVTIRGSNLGQHVQDVLGMVTVAGVPCAVDAQEYEVSSSLVCITGASGEEVAGATAVEVPGRGRGVSEHDFAYQDPKVHSIFPARGPRAGGTRLTLNGSKLLTGRLEDIRVVVGDQPCHLLPEQQSEQLRCETSPRPTPATLPVAVWFGATERRLQRGQFKYTLDPNITSAGPTKSFLSGGREICVRGQNLDVVQTPRIRVTVVSRMLQPSQGLGRRRRVVPETACSLGPSCSSQQFEEPCHVNSSQLITCRTPALPGLPEDPWVRVEFILDNLVFDFATLNPTPFSYEADPTLQPLNPEDPTMPFRHKPGSVFSVEGENLDLAMSKEEVVAMIGDGPCVVKTLTRHHLYCEPPVEQPLPRHHALREAPDSLPEFTVQMGNLRFSLGHVQYDGESPGAFPVAAQVGLGVGTSLLALGVIIIVLMYRRKSKQALRDYKKVQIQLENLESSVRDRCKKEFTDLMTEMTDLTSDLLGSGIPFLDYKVYAERIFFPGHRESPLHRDLGVPESRRPTVEQGLGQLSNLLNSKLFLTKFIHTLESQRTFSARDRAYVASLLTVALHGKLEYFTDILRTLLSDLVAQYVAKNPKLMLRRTETVVEKLLTNWMSICLYTFVRDSVGEPLYMLFRGIKHQVDKGPVDSVTGKAKYTLNDNRLLREDVEYRPLTLNALLAVGPGAGEAQGVPVKVLDCDTISQAKEKMLDQLYKGVPLTQRPDPRTLDVEWRSGVAGHLILSDEDVTSEVQGLWRRLNTLQHYKVPDGATVALVPCLTKHVLRENQDYVPGERTPMLEDVDEGGIRPWHLVKPSDEPEPPRPRRGSLRGGERERAKAIPEIYLTRLLSMKGTLQKFVDDLFQVILSTSRPVPLAVKYFFDLLDEQAQQHGISDQDTIHIWKTNSLPLRFWINIIKNPQFVFDVQTSDNMDAVLLVIAQTFMDACTLADHKLGRDSPINKLLYARDIPRYKRMVERYYADIRQTVPASDQEMNSVLAELSWNYSGDLGARVALHELYKYINKYYDQIITALEEDGTAQKMQLGYRLQQIAAAVENKVTDL.

The signal sequence occupies residues 1 to 19 (MPALGPALLQALWAGWVLT). Residues 20-479 (LQPLPPTAFT…TQSTLLKVPV (460 aa)) enclose the Sema domain. At 20-1490 (LQPLPPTAFT…SPGAFPVAAQ (1471 aa)) the chain is on the extracellular side. Asn-31 carries an N-linked (GlcNAc...) asparagine glycan. Disulfide bonds link Cys-79/Cys-88, Cys-111/Cys-119, Cys-252/Cys-377, Cys-268/Cys-322, Cys-340/Cys-364, Cys-482/Cys-499, Cys-488/Cys-533, Cys-491/Cys-508, and Cys-502/Cys-514. The N-linked (GlcNAc...) asparagine glycan is linked to Asn-334. The N-linked (GlcNAc...) asparagine glycan is linked to Asn-543. Cys-570 and Cys-588 are joined by a disulfide. Disordered regions lie at residues 671 to 829 (MVAS…TTFP) and 849 to 884 (LPEA…PPAP). Residues 681 to 697 (SPDPPARGGPSPSPPTA) show a composition bias toward pro residues. 2 stretches are compositionally biased toward low complexity: residues 698-710 (PKAL…DTLP) and 734-754 (SPWG…TGSP). IPT/TIG domains lie at 1070 to 1160 (PLIH…FAYQ), 1162 to 1249 (PKVH…FKYT), and 1252 to 1375 (PNIT…FSYE). N-linked (GlcNAc...) asparagine glycosylation is found at Asn-1183, Asn-1253, and Asn-1330. The helical transmembrane segment at 1491-1511 (VGLGVGTSLLALGVIIIVLMY) threads the bilayer. Residues 1507-1539 (IVLMYRRKSKQALRDYKKVQIQLENLESSVRDR) adopt a coiled-coil conformation. Residues 1512–2135 (RRKSKQALRD…AAVENKVTDL (624 aa)) lie on the Cytoplasmic side of the membrane. The segment at 1883–1908 (PWHLVKPSDEPEPPRPRRGSLRGGER) is disordered. The segment covering 1888–1897 (KPSDEPEPPR) has biased composition (basic and acidic residues).

The protein belongs to the plexin family. In terms of assembly, monomer, and heterodimer with PLXNB2 after proteolytic processing. Binds RAC1 that has been activated by GTP binding. Interaction with SEMA4D promotes binding of cytoplasmic ligands. Interacts with PLXNA1. Interacts with ARHGEF11 and ARHGEF12. Interacts with ERBB2. Interacts with MET. Interacts with MST1R. Interacts with RRAS. Interacts with RHOD. Interacts with RND1. Interacts with NRP1 and NRP2. Post-translationally, phosphorylated on tyrosine residues by ERBB2 and MET upon SEMA4D binding. In terms of processing, proteolytic processing favors heterodimerization with PLXNB2 and SEMA4D binding. In terms of tissue distribution, highly expressed in fetal kidney, and at slightly lower levels in fetal brain, lung and liver.

It localises to the cell membrane. It is found in the secreted. Its function is as follows. Receptor for SEMA4D. Plays a role in GABAergic synapse development. Mediates SEMA4A- and SEMA4D-dependent inhibitory synapse development. Plays a role in RHOA activation and subsequent changes of the actin cytoskeleton. Plays a role in axon guidance, invasive growth and cell migration. This is Plexin-B1 (PLXNB1) from Homo sapiens (Human).